The primary structure comprises 575 residues: MRAWTGSWRWIMLILFAWGTLLFYIGGHLVRDNDHPDHSSRELSKILAKLERLKQQNEDLRRMAESLRIPEGPIDQGTATGRVRVLEEQLVKAKEQIENYKKQARNGLGKDHELLRRRIENGAKELWFFLQSELKKLKHLEGNELQRHADEILLDLGHHERSIMTDLYYLSQTDGAGDWREKEAKDLTELVQRRITYLQNPKDCSKARKLVCNINKGCGYGCQLHHVVYCFMIAYGTQRTLILESQNWRYATGGWETVFRPVSETCTDRSGLSTGHWSGEVNDKNIQVVELPIVDSLHPRPPYLPLAVPEDLADRLVRVHGDPAVWWVSQFVKYLIRPQPWLEKEIEEATKKLGFKHPVIGVHVRRTDKVGTEAAFHPIEEYMVHVEEHFQLLARRMQVDKKRVYLATDDPALLKEAKTKYSNYEFISDNSISWSAGLHNRYTENSLRGVILDIHFLSQADFLVCTFSSQVCRVAYEIMQTLHPDASANFHSLDDIYYFGGQNAHNQIAVYPHKPRTDEEIPMEPGDIIGVAGNHWDGYSKGVNRKLGKTGLYPSYKVREKIETVKYPTYPEAEK.

Residues 1–9 (MRAWTGSWR) are Cytoplasmic-facing. A helical; Signal-anchor for type II membrane protein membrane pass occupies residues 10–30 (WIMLILFAWGTLLFYIGGHLV). At 31–575 (RDNDHPDHSS…KYPTYPEAEK (545 aa)) the chain is on the lumenal side. Cystine bridges form between Cys-204-Cys-266, Cys-212-Cys-230, and Cys-218-Cys-222. Residues 206 to 493 (KARKLVCNIN…PDASANFHSL (288 aa)) enclose the GT23 domain. Ser-278 is subject to Phosphoserine. An SH3-binding motif is present at residues 299–305 (PRPPYLP). The segment at 365–366 (RR) is important for donor substrate binding. An intrachain disulfide couples Cys-465 to Cys-472. In terms of domain architecture, SH3 spans 502 to 563 (QNAHNQIAVY…PSYKVREKIE (62 aa)).

Belongs to the glycosyltransferase 23 family. Post-translationally, tyrosine phosphorylated by PKDCC/VLK.

It localises to the golgi apparatus. The protein resides in the golgi stack membrane. It carries out the reaction N(4)-{beta-D-GlcNAc-(1-&gt;2)-alpha-D-Man-(1-&gt;3)-[beta-D-GlcNAc-(1-&gt;2)-alpha-D-Man-(1-&gt;6)]-beta-D-Man-(1-&gt;4)-beta-D-GlcNAc-(1-&gt;4)-beta-D-GlcNAc}-L-asparaginyl-[protein] + GDP-beta-L-fucose = an N(4)-{beta-D-GlcNAc-(1-&gt;2)-alpha-D-Man-(1-&gt;3)-[beta-D-GlcNAc-(1-&gt;2)-alpha-D-Man-(1-&gt;6)]-beta-D-Man-(1-&gt;4)-beta-D-GlcNAc-(1-&gt;4)-[alpha-L-Fuc-(1-&gt;6)]-beta-D-GlcNAc}-L-asparaginyl-[protein] + GDP + H(+). It participates in protein modification; protein glycosylation. Catalyzes the addition of fucose in alpha 1-6 linkage to the first GlcNAc residue, next to the peptide chains in N-glycans. This chain is Alpha-(1,6)-fucosyltransferase (Fut8), found in Rattus norvegicus (Rat).